Consider the following 464-residue polypeptide: Cysteine--tRNA ligase (464 aa).

A Zn(2+)-binding site is contributed by Cys-27. The 'HIGH' region signature appears at 29 to 39; the sequence is PTVYNFFHIGN. Residues Cys-207, His-232, and Glu-236 each coordinate Zn(2+). The 'KMSKS' region signature appears at 264–268; it reads KMSKS. Lys-267 contacts ATP.

This sequence belongs to the class-I aminoacyl-tRNA synthetase family. As to quaternary structure, monomer. The cofactor is Zn(2+).

It is found in the cytoplasm. The catalysed reaction is tRNA(Cys) + L-cysteine + ATP = L-cysteinyl-tRNA(Cys) + AMP + diphosphate. This Clostridium acetobutylicum (strain ATCC 824 / DSM 792 / JCM 1419 / IAM 19013 / LMG 5710 / NBRC 13948 / NRRL B-527 / VKM B-1787 / 2291 / W) protein is Cysteine--tRNA ligase.